The chain runs to 381 residues: Dihydroorotate dehydrogenase (quinone) (381 aa).

FMN-binding positions include 74–78 (AGFDK) and Thr-98. Lys-78 lines the substrate pocket. 123-127 (NRMGF) serves as a coordination point for substrate. FMN-binding residues include Asn-152 and Asn-185. Asn-185 is a binding site for substrate. Ser-188 functions as the Nucleophile in the catalytic mechanism. A substrate-binding site is contributed by Asn-190. FMN is bound by residues Lys-223 and Thr-251. Position 252-253 (252-253 (NT)) interacts with substrate. FMN contacts are provided by residues Gly-289, Gly-318, and 339-340 (YT). A disordered region spans residues 359 to 381 (RSSPPSPDVTLPPENTPVGQIQA).

Belongs to the dihydroorotate dehydrogenase family. Type 2 subfamily. As to quaternary structure, monomer. FMN is required as a cofactor.

It is found in the cell membrane. It catalyses the reaction (S)-dihydroorotate + a quinone = orotate + a quinol. It participates in pyrimidine metabolism; UMP biosynthesis via de novo pathway; orotate from (S)-dihydroorotate (quinone route): step 1/1. Its function is as follows. Catalyzes the conversion of dihydroorotate to orotate with quinone as electron acceptor. The polypeptide is Dihydroorotate dehydrogenase (quinone) (Synechococcus sp. (strain JA-2-3B'a(2-13)) (Cyanobacteria bacterium Yellowstone B-Prime)).